Here is a 316-residue protein sequence, read N- to C-terminus: Methionyl-tRNA formyltransferase (316 aa).

112 to 115 serves as a coordination point for (6S)-5,6,7,8-tetrahydrofolate; the sequence is SLLP.

Belongs to the Fmt family.

It catalyses the reaction L-methionyl-tRNA(fMet) + (6R)-10-formyltetrahydrofolate = N-formyl-L-methionyl-tRNA(fMet) + (6S)-5,6,7,8-tetrahydrofolate + H(+). In terms of biological role, attaches a formyl group to the free amino group of methionyl-tRNA(fMet). The formyl group appears to play a dual role in the initiator identity of N-formylmethionyl-tRNA by promoting its recognition by IF2 and preventing the misappropriation of this tRNA by the elongation apparatus. This is Methionyl-tRNA formyltransferase from Glaesserella parasuis serovar 5 (strain SH0165) (Haemophilus parasuis).